The following is a 509-amino-acid chain: Solute carrier family 2, facilitated glucose transporter member 4 (509 aa).

Residues 1–24 (MPSGFQQIGSEDGEPPRQRVTGTL) lie on the Cytoplasmic side of the membrane. Residues 7–13 (QIGSEDG) form an interaction with SRFBP1 region. The residue at position 10 (Ser10) is a Phosphoserine. The helical transmembrane segment at 25 to 45 (VLAVFSAVLGSLQFGYNIGVI) threads the bilayer. Topologically, residues 46 to 81 (NAPQKVIEQSYNETWLGRQGPEGPGSIPPGTLTTLW) are extracellular. Asn57 carries an N-linked (GlcNAc...) asparagine glycan. A helical transmembrane segment spans residues 82-102 (ALSVAIFSVGGMISSFLIGII). Topologically, residues 103 to 111 (SQWLGRKRA) are cytoplasmic. The helical transmembrane segment at 112-132 (MLFNNALAVLGGTLMGLAKAA) threads the bilayer. Residues 133-142 (ASYEMLILGR) lie on the Extracellular side of the membrane. Residues 143–163 (FFIGAYSGLTSGLVPMYVGEI) traverse the membrane as a helical segment. Over 164-171 (APTHLRGA) the chain is Cytoplasmic. Residues 172 to 192 (LGTLNQLAIVTGILIAQVLGL) traverse the membrane as a helical segment. Residue Gln177 participates in D-glucose binding. Residues 193–200 (ESMLGTAT) are Extracellular-facing. A helical transmembrane segment spans residues 201–221 (LWPLLLGITVLPALLQMVLLP). Over 222 to 287 (LCPESPRYLY…LLGSHTHRQP (66 aa)) the chain is Cytoplasmic. Cys223 carries S-palmitoyl cysteine lipidation. Ser274 is modified (phosphoserine; by SGK1). A helical membrane pass occupies residues 288-308 (LVIAIVLQLSQQLSGINAVFY). Residues 298 to 299 (QQ) and Asn304 each bind D-glucose. The Extracellular segment spans residues 309-323 (YSTSIFESAGVEKPA). Residues 324 to 344 (YATIGAGVVNTVFTLVSVFLV) traverse the membrane as a helical segment. Asn333 contacts D-glucose. Residues 345-353 (ERAGRRTLH) lie on the Cytoplasmic side of the membrane. The chain crosses the membrane as a helical span at residues 354–374 (LLGLAGMCGCAILMTVALLLL). Topologically, residues 375–384 (ERVPAMSYVS) are extracellular. Residues 385–405 (IVAIFGFVAFFEIGPGPIPWF) traverse the membrane as a helical segment. 2 residues coordinate D-glucose: Glu396 and Trp404. The Cytoplasmic segment spans residues 406-417 (IVAELFSQGPRP). Residues 418 to 438 (AAMAVAGFSNWTCNFIIGMGF) form a helical membrane-spanning segment. Residues 439-445 (QYVADAM) lie on the Extracellular side of the membrane. A helical membrane pass occupies residues 446–466 (GPYVFLLFAVLLLGFFIFTFL). Topologically, residues 467–509 (KVPETRGRTFDQISAVFHRTPSLLEQEVKPSTELEYLGPDEHD) are cytoplasmic. At Thr486 the chain carries Phosphothreonine. Ser488 bears the Phosphoserine mark. The Dileucine internalization motif motif lies at 489-490 (LL).

It belongs to the major facilitator superfamily. Sugar transporter (TC 2.A.1.1) family. Glucose transporter subfamily. In terms of assembly, binds to DAXX. Interacts via its N-terminus with SRFBP1. Interacts with NDUFA9. Interacts with TRARG1; the interaction is required for proper SLC2A4 recycling after insulin stimulation. Sumoylated. Post-translationally, palmitoylated. Palmitoylation by ZDHHC7 controls the insulin-dependent translocation of GLUT4 to the plasma membrane.

The protein localises to the cell membrane. The protein resides in the endomembrane system. Its subcellular location is the cytoplasm. It is found in the perinuclear region. It carries out the reaction D-glucose(out) = D-glucose(in). Its function is as follows. Insulin-regulated facilitative glucose transporter, which plays a key role in removal of glucose from circulation. Response to insulin is regulated by its intracellular localization: in the absence of insulin, it is efficiently retained intracellularly within storage compartments in muscle and fat cells. Upon insulin stimulation, translocates from these compartments to the cell surface where it transports glucose from the extracellular milieu into the cell. The polypeptide is Solute carrier family 2, facilitated glucose transporter member 4 (Bos taurus (Bovine)).